The chain runs to 410 residues: Cell division protein FtsZ (410 aa).

Residues 22–26 (GGGGN), 109–111 (GTG), Glu-140, Arg-144, and Asp-188 each bind GTP. Residues 318–410 (ESKKDRKPHR…STPPFFRRKR (93 aa)) form a disordered region. A compositionally biased stretch (polar residues) spans 330–344 (RQAVQPMQQTTQSVE). Residues 360–398 (WDIRREQNTRPKVDESSLEQVDKKEFDTFHREEPNHNDD) are compositionally biased toward basic and acidic residues.

It belongs to the FtsZ family. As to quaternary structure, homodimer. Polymerizes to form a dynamic ring structure in a strictly GTP-dependent manner. Interacts directly with several other division proteins.

It is found in the cytoplasm. Its function is as follows. Essential cell division protein that forms a contractile ring structure (Z ring) at the future cell division site. The regulation of the ring assembly controls the timing and the location of cell division. One of the functions of the FtsZ ring is to recruit other cell division proteins to the septum to produce a new cell wall between the dividing cells. Binds GTP and shows GTPase activity. The polypeptide is Cell division protein FtsZ (Enterococcus faecalis (strain ATCC 700802 / V583)).